The sequence spans 233 residues: Large ribosomal subunit protein uL1 (233 aa).

This sequence belongs to the universal ribosomal protein uL1 family. As to quaternary structure, part of the 50S ribosomal subunit.

Its function is as follows. Binds directly to 23S rRNA. The L1 stalk is quite mobile in the ribosome, and is involved in E site tRNA release. In terms of biological role, protein L1 is also a translational repressor protein, it controls the translation of the L11 operon by binding to its mRNA. In Shewanella sp. (strain MR-4), this protein is Large ribosomal subunit protein uL1.